We begin with the raw amino-acid sequence, 249 residues long: ATP synthase subunit a (249 aa).

6 consecutive transmembrane segments (helical) span residues 30–50 (SAYM…GSAG), 84–104 (FFPL…VGII), 113–133 (HIIV…IYGF), 143–163 (IFVP…IEVF), 196–216 (LLAG…GMVV), and 221–241 (LELL…CIYL).

Belongs to the ATPase A chain family. In terms of assembly, F-type ATPases have 2 components, CF(1) - the catalytic core - and CF(0) - the membrane proton channel. CF(1) has five subunits: alpha(3), beta(3), gamma(1), delta(1), epsilon(1). CF(0) has four main subunits: a, b, b' and c.

The protein resides in the cell inner membrane. In terms of biological role, key component of the proton channel; it plays a direct role in the translocation of protons across the membrane. The protein is ATP synthase subunit a of Rhodopseudomonas palustris (strain BisA53).